The following is a 557-amino-acid chain: Polypyrimidine tract-binding protein 1 (557 aa).

The residue at position 1 (Met1) is an N-acetylmethionine. Phosphoserine is present on Ser16. 3 consecutive RRM domains span residues 59 to 143 (RVIH…SSPN), 184 to 260 (LRII…FSKL), and 363 to 437 (SVLL…LSKH). Lys65 participates in a covalent cross-link: Glycyl lysine isopeptide (Lys-Gly) (interchain with G-Cter in SUMO2). The residue at position 127 (Tyr127) is a Phosphotyrosine. The residue at position 138 (Thr138) is a Phosphothreonine. Ser141 is subject to Phosphoserine. Lys218 participates in a covalent cross-link: Glycyl lysine isopeptide (Lys-Gly) (interchain with G-Cter in SUMO2). Ser459 is modified (phosphoserine). The RRM 4 domain occupies 480–555 (ATLHLSNIPP…HHLRVSFSKS (76 aa)).

Monomer. Part of a ternary complex containing KHSRP, PTBP1, PTBP2 and HNRPH1. Interacts with RAVER1 and SFPQ. Interacts with IVNS1ABP (via BACK domain); the interaction is direct.

The protein localises to the nucleus. Plays a role in pre-mRNA splicing and in the regulation of alternative splicing events. Activates exon skipping of its own pre-mRNA during muscle cell differentiation. Binds to the polypyrimidine tract of introns. May promote RNA looping when bound to two separate polypyrimidine tracts in the same pre-mRNA. May promote the binding of U2 snRNP to pre-mRNA. Cooperates with RAVER1 to modulate switching between mutually exclusive exons during maturation of the TPM1 pre-mRNA. Represses the splicing of MAPT/Tau exon 10. Binds to polypyrimidine-rich controlling element (PCE) of CFTR and promotes exon skipping of CFTR exon 9, thereby antagonizing TIA1 and its role in exon inclusion of CFTR exon 9. Plays a role in the splicing of pyruvate kinase PKM by binding repressively to a polypyrimidine tract flanking PKM exon 9, inhibiting exon 9 inclusion and resulting in exon 10 inclusion and production of the PKM M2 isoform. In case of infection by picornaviruses, binds to the viral internal ribosome entry site (IRES) and stimulates the IRES-mediated translation. The polypeptide is Polypyrimidine tract-binding protein 1 (PTBP1) (Homo sapiens (Human)).